Reading from the N-terminus, the 229-residue chain is ATP synthase subunit a (229 aa).

The next 6 membrane-spanning stretches (helical) occupy residues 14–34 (LIAI…ALIL), 68–88 (YFPF…LGLF), 98–118 (IVVT…GGLW), 124–144 (FLSI…LVLI), 157–179 (GVRL…GFGF), and 189–209 (NIFP…VAVI).

Belongs to the ATPase A chain family. F-type ATPases have 2 components, CF(1) - the catalytic core - and CF(0) - the membrane proton channel. CF(1) has five subunits: alpha(3), beta(3), gamma(1), delta(1), epsilon(1). CF(0) has three main subunits: a, b and c.

The protein resides in the mitochondrion inner membrane. Its function is as follows. Mitochondrial membrane ATP synthase (F(1)F(0) ATP synthase or Complex V) produces ATP from ADP in the presence of a proton gradient across the membrane which is generated by electron transport complexes of the respiratory chain. F-type ATPases consist of two structural domains, F(1) - containing the extramembraneous catalytic core and F(0) - containing the membrane proton channel, linked together by a central stalk and a peripheral stalk. During catalysis, ATP synthesis in the catalytic domain of F(1) is coupled via a rotary mechanism of the central stalk subunits to proton translocation. Key component of the proton channel; it may play a direct role in the translocation of protons across the membrane. The protein is ATP synthase subunit a (ATPASE6) of Metridium senile (Brown sea anemone).